Consider the following 581-residue polypeptide: Zinc metalloproteinase nas-36 (581 aa).

Residues 1–95 constitute a propeptide that is removed on maturation; sequence MKEIAHSQAY…FRGANEKGKR (95 aa). N67 is a glycosylation site (N-linked (GlcNAc...) asparagine). Residues 97 to 290 form the Peptidase M12A domain; that stretch reads AAEYDAKWFQ…IKLINEAYCK (194 aa). Cystine bridges form between C137/C289, C159/C178, C293/C313, C315/C324, and C336/C364. H186 lines the Zn(2+) pocket. The active site involves E187. The Zn(2+) site is built by H190 and H196. An EGF-like domain is found at 285–325; sequence NEAYCKGDCKEKNECKNGGYLNPSNCQSCLCPSGFGGSKCE. One can recognise a CUB domain in the interval 336-449; it reads CGGTLKAIID…TGFKLKFRKT (114 aa). N-linked (GlcNAc...) asparagine glycosylation is present at N418. In terms of domain architecture, TSP type-1 spans 474–523; that stretch reads NDIWSEWGEWSQCSRSCGACGIKSRLRICKTAQCSGKVQQFLTCNLQACP. Cystine bridges form between C486–C517, C490–C522, and C502–C507.

Zn(2+) serves as cofactor.

It localises to the secreted. Its activity is regulated as follows. Inhibited by 1,10-phenanthroline. Its function is as follows. Metalloprotease. Involved in molting, a process during larval stages in which a new cuticle is formed and the old cuticle is shed. This chain is Zinc metalloproteinase nas-36, found in Brugia malayi (Filarial nematode worm).